A 238-amino-acid polypeptide reads, in one-letter code: Ribosomal RNA small subunit methyltransferase G (238 aa).

S-adenosyl-L-methionine contacts are provided by residues glycine 77, phenylalanine 82, 128 to 129 (AE), and arginine 147.

It belongs to the methyltransferase superfamily. RNA methyltransferase RsmG family.

It is found in the cytoplasm. Its function is as follows. Specifically methylates the N7 position of guanine in position 535 of 16S rRNA. This is Ribosomal RNA small subunit methyltransferase G from Lysinibacillus sphaericus (strain C3-41).